Reading from the N-terminus, the 439-residue chain is Ribosomal protein uS12 methylthiotransferase RimO (439 aa).

In terms of domain architecture, MTTase N-terminal spans 4 to 114 (PKVGFVSLGR…VVRAVHGVAP (111 aa)). Residues 133 to 370 (LTPRHYAYLK…MEHQQAISTA (238 aa)) form the Radical SAM core domain. Residues C147, C151, and C154 each contribute to the [4Fe-4S] cluster site. The TRAM domain maps to 373–439 (STRVGREIDV…EYDLWGERIA (67 aa)).

Belongs to the methylthiotransferase family. RimO subfamily. It depends on [4Fe-4S] cluster as a cofactor.

The protein resides in the cytoplasm. The catalysed reaction is L-aspartate(89)-[ribosomal protein uS12]-hydrogen + (sulfur carrier)-SH + AH2 + 2 S-adenosyl-L-methionine = 3-methylsulfanyl-L-aspartate(89)-[ribosomal protein uS12]-hydrogen + (sulfur carrier)-H + 5'-deoxyadenosine + L-methionine + A + S-adenosyl-L-homocysteine + 2 H(+). Its function is as follows. Catalyzes the methylthiolation of an aspartic acid residue of ribosomal protein uS12. This Bordetella bronchiseptica (strain ATCC BAA-588 / NCTC 13252 / RB50) (Alcaligenes bronchisepticus) protein is Ribosomal protein uS12 methylthiotransferase RimO.